Here is a 959-residue protein sequence, read N- to C-terminus: MGLSEDLHARARTLMQTLESALNTPGSRGIGTANPTIYDTAWVAMVSREIDGKQVFVFPETFTYIYEHQEADGSWSGDGSLIDSIVNTLACLLALKMHESNASKPDIPARARAAQHYLNDALQRWDIMETERVAYEMIVPCLLKQLDTFGVSFTFPHRDLLYNMYAGKLAKLNWEAIYAKNSSLLHCMEAFVGVCDFDRMPHLLRDGNFMATPSTTAAYLMKATKWDDRAENYLRHVIEVYAPHGRDVVPNLWPMTFFEIVWSLSSLYDNNLDFAQMDPECLDRIALKLREFLVAGKGVLGFVPGTTHDADMSSKTLMLLQVLNHPYSHDEFVTEFEAPTYFRCYSFERNASVTVNSNCLMSLLHAPDVNKYESQIVKIATYVADVWWTSAGVVKDKWNVSEWYSSMLSSQALVRLLFEHGKGNLKSISEELLSKVSIACFTMISRILQSQKPDGSWGCAEETSYALITLANVASLPTCDLIRDHLNQVIESAKAFLTSIFYARPAAKPEDRVWIDKVTYSVESFRDAYLVSALNVPIPRFDPASITTLPPISQTLPKELAKFFGRLDMFKPAPDWRKLTWGIEATLMGPELNRVPSLTFEKVEKGANGKWFEFLPYMTIAPSGLQGTPISSQGMLDVLVLIRALYNTDDYLDMTLIKATNKDLNDLKKKIRDLFANPTSFSTLNEVPDDRMPTHIEVIERFAHSLLNYPRIQLASDNDKNLLRSEIEHYFLAGIAQCEENILLRERGLDKERVGTSHYRWTHVIGADNVAGTIALVFAFCLLGHQINEERGSRDLVDVFPTPVLKYLFNDCVMHFGAFSRLANDLHSISRDFNEVNLNSIMFSEFTGPKSGTDTEKAREAALLELVKYERKETDDAFEYLVQQLTPHVGAKRARDYINIIRVTYLHTALYDDLGRLTRADISNANREVSKGANGVKKTNGLTTNGTKATANGSNGIHH.

The segment at 1–542 (MGLSEDLHAR…ALNVPIPRFD (542 aa)) is class II diterpene cyclase. The short motif at 309–312 (DADM) is the DXDD motif element. D311 acts as the For class II diterpene cyclase activity in catalysis. Residues 543 to 959 (PASITTLPPI…TANGSNGIHH (417 aa)) are class I diterpene synthase. D649 functions as the For class I diterpene synthase activity in the catalytic mechanism. D649, D653, and N824 together coordinate Mg(2+). A DDXXD motif motif is present at residues 649-653 (DDYLD). The segment at 931–959 (KGANGVKKTNGLTTNGTKATANGSNGIHH) is disordered. The span at 934–959 (NGVKKTNGLTTNGTKATANGSNGIHH) shows a compositional bias: low complexity.

This sequence belongs to the terpene synthase family. It depends on Mg(2+) as a cofactor.

It functions in the pathway secondary metabolite biosynthesis; terpenoid biosynthesis. In terms of biological role, bifunctional premutilin synthase; part of the gene cluster that mediates the biosynthesis of pleuromutilin, a tricyclic diterpene showing antibacterial properties. The geranylgeranyl diphosphate (GGPP) synthase ple4 catalyzes the first step in pleuromutilin biosynthesis. GGPP is then substrate of the premutilin synthase (PS) ple3 to yield premutilin. Premutilin synthase is a bifunctional enzyme composed of the fusion of a class II diterpene cyclase (DTC) and a class I diterpene synthase (DTS), with the corresponding domains and active sites containing characteristic aspartate-rich motifs. GGPP is first converted to mutildienyl-diphosphate (MPP) at the class II DTC site. MPP is subsequently further cyclized at the class I DTS site, followed by a 1,5-hydride shift and addition of water prior to terminating deprotonation, to yield premutilin. The cytochrome P450 monooxygenases ple5 and ple6 hydroxylate premutilin at C-11 and C-3, respectively, producing 11-hydroxypremutilin and 3-hydroxypremutilin. The combination of the actions of both ple5 and ple6 leads to the production of 3,11-dihydroxypremutilin. The short chain dehydrogenase ple7 further converts 3,11-dihydroxypremutilin into mutilin. The acetyltransferase ple2 then acetylates mutilin to produce 14-O-acetylmutilin. Finally, the cytochrome P450 monooxygenase ple1 catalyzes hydroxylation on the alpha position of the acetyl side chain of 14-O-acetylmutilin to yield pleuromutilin. The protein is Bifunctional premutilin synthase of Rhodocybe pseudopiperita (Clitopilus pseudopiperitus).